A 186-amino-acid chain; its full sequence is Ribosome-recycling factor (186 aa).

It belongs to the RRF family.

It localises to the cytoplasm. Its function is as follows. Responsible for the release of ribosomes from messenger RNA at the termination of protein biosynthesis. May increase the efficiency of translation by recycling ribosomes from one round of translation to another. The protein is Ribosome-recycling factor of Burkholderia ambifaria (strain ATCC BAA-244 / DSM 16087 / CCUG 44356 / LMG 19182 / AMMD) (Burkholderia cepacia (strain AMMD)).